The chain runs to 496 residues: Ammonium transporter 1 member 2 (496 aa).

11 consecutive transmembrane segments (helical) span residues 39 to 59 (LLFS…LCAG), 74 to 94 (VLDA…FAFG), 120 to 140 (FFLF…GSIA), 148 to 168 (YLIY…HWIW), 192 to 212 (FAGS…GALI), 236 to 256 (LVVL…PGSF), 274 to 296 (SAVG…TTLF), 307 to 327 (VIDV…GCSV), 331 to 351 (WAAI…NALA), 360 to 380 (LEAA…TALF), and 412 to 432 (IVVI…LFLV).

The protein belongs to the ammonia transporter channel (TC 1.A.11.2) family. In terms of tissue distribution, expressed in exodermis, sclerenchyma, endodermis and pericycle cells of primary root tips.

It localises to the membrane. Its function is as follows. Ammonium transporter probably involved in ammonium uptake from the soil and ammonium uptake and retrieval in the vascular system. This Oryza sativa subsp. japonica (Rice) protein is Ammonium transporter 1 member 2 (AMT1-2).